Here is a 126-residue protein sequence, read N- to C-terminus: Aspartate 1-decarboxylase (126 aa).

The Schiff-base intermediate with substrate; via pyruvic acid role is filled by Ser25. Ser25 bears the Pyruvic acid (Ser) mark. A substrate-binding site is contributed by Thr57. The active-site Proton donor is the Tyr58. 73–75 (GGA) provides a ligand contact to substrate.

It belongs to the PanD family. In terms of assembly, heterooctamer of four alpha and four beta subunits. Requires pyruvate as cofactor. Is synthesized initially as an inactive proenzyme, which is activated by self-cleavage at a specific serine bond to produce a beta-subunit with a hydroxyl group at its C-terminus and an alpha-subunit with a pyruvoyl group at its N-terminus.

The protein localises to the cytoplasm. It carries out the reaction L-aspartate + H(+) = beta-alanine + CO2. The protein operates within cofactor biosynthesis; (R)-pantothenate biosynthesis; beta-alanine from L-aspartate: step 1/1. In terms of biological role, catalyzes the pyruvoyl-dependent decarboxylation of aspartate to produce beta-alanine. The protein is Aspartate 1-decarboxylase of Xylella fastidiosa (strain M12).